The primary structure comprises 240 residues: L-isoleucine-4-hydroxylase (240 aa).

Residues H159, D161, and H212 each coordinate Fe cation.

The protein belongs to the iron/ascorbate-dependent oxidoreductase family. The cofactor is L-ascorbate. Fe(2+) serves as cofactor.

The enzyme catalyses L-isoleucine + 2-oxoglutarate + O2 = (4S)-4-hydroxy-L-isoleucine + succinate + CO2. Catalyzes the hydroxylation of L-isoleucine to produce (4S)-4-hydroxy-L-isoleucine. Can also catalyze the hydroxylation of L-leucine, L-norvaline, L-norleucine and L-allo-isoleucine, as well as the sulfoxidation of L-methionine, L-ethionine, S-methyl-L-cysteine, S-ethyl-L-cysteine, and S-allyl-L-cysteine. This is L-isoleucine-4-hydroxylase from Bacillus thuringiensis.